The chain runs to 581 residues: ATP-dependent lipid A-core flippase (581 aa).

A run of 5 helical transmembrane segments spans residues 15-35 (LWPI…ALII), 62-82 (ISIW…SSGF), 152-172 (IIGL…VLII), 252-272 (IIIQ…SSLP), and 274-294 (IIDE…IALM). The ABC transmembrane type-1 domain occupies 27-309 (IISIVALIIN…LTNVNANFQK (283 aa)). The ABC transporter domain occupies 341–577 (IKFKNITFTY…KGVYAQIYRL (237 aa)). 375 to 382 (GSSGAGKS) is an ATP binding site.

It belongs to the ABC transporter superfamily. Lipid exporter (TC 3.A.1.106) family. In terms of assembly, homodimer.

It is found in the cell membrane. The catalysed reaction is ATP + H2O + lipid A-core oligosaccharideSide 1 = ADP + phosphate + lipid A-core oligosaccharideSide 2.. In terms of biological role, involved in lipopolysaccharide (LPS) biosynthesis. Translocates lipid A-core from the inner to the outer leaflet of the inner membrane. Transmembrane domains (TMD) form a pore in the inner membrane and the ATP-binding domain (NBD) is responsible for energy generation. This Wigglesworthia glossinidia brevipalpis protein is ATP-dependent lipid A-core flippase.